Here is a 71-residue protein sequence, read N- to C-terminus: UPF0346 protein BCE_2336 (71 aa).

The protein belongs to the UPF0346 family.

This is UPF0346 protein BCE_2336 from Bacillus cereus (strain ATCC 10987 / NRS 248).